The chain runs to 254 residues: Probable pectate lyase E (254 aa).

A signal peptide spans 1–17 (MLQSLLLLPLFLTSAFA). Residue Asn-175 is glycosylated (N-linked (GlcNAc...) asparagine). Residues 228 to 254 (NNNGKEPKKKSSGPSKACEYNQPLKKC) are disordered.

Belongs to the polysaccharide lyase 3 family. Requires Ca(2+) as cofactor.

It localises to the secreted. It carries out the reaction Eliminative cleavage of (1-&gt;4)-alpha-D-galacturonan to give oligosaccharides with 4-deoxy-alpha-D-galact-4-enuronosyl groups at their non-reducing ends.. In terms of biological role, pectinolytic enzyme consist of four classes of enzymes: pectin lyase, polygalacturonase, pectin methylesterase and rhamnogalacturonase. Among pectinolytic enzymes, pectin lyase is the most important in depolymerization of pectin, since it cleaves internal glycosidic bonds of highly methylated pectins. Favors pectate, the anion, over pectin, the methyl ester. The protein is Probable pectate lyase E (plyE) of Aspergillus clavatus (strain ATCC 1007 / CBS 513.65 / DSM 816 / NCTC 3887 / NRRL 1 / QM 1276 / 107).